The primary structure comprises 471 residues: Eremophilane O-acetyltransferase prx11 (471 aa).

The protein belongs to the fumigaclavine B O-acetyltransferase family. Monomer.

The protein operates within sesquiterpene biosynthesis. O-acetyltransferase; part of the gene cluster that mediates the biosynthesis of PR-toxin, a bicyclic sesquiterpene belonging to the eremophilane class and acting as a mycotoxin. The first step of the pathway is catalyzed by the aristolochene synthase which performs the cyclization of trans,trans-farnesyl diphosphate (FPP) to the bicyclic sesquiterpene aristolochene. Following the formation of aristolochene, the non-oxygenated aristolochene is converted to the trioxygenated intermediate eremofortin B, via 7-epi-neopetasone. This conversion appears to involve three enzymes, a hydroxysterol oxidase-like enzyme, the quinone-oxidase prx3 that forms the quinone-type-structure in the bicyclic nucleus of aristolochene with the C8-oxo group and the C-3 hydroxyl group, and the P450 monooxygenase prx9 that introduces the epoxide at the double bond between carbons 1 and 2. No monoxy or dioxy-intermediates have been reported to be released to the broth, so these three early oxidative reactions may be coupled together. Eremofortin B is further oxidized by another P450 monooxygenase, that introduces a second epoxide between carbons 7 and 11 prior to acetylation to eremofortin A by the acetyltransferase prx11. The second epoxidation may be performed by a second P450 monooxygenase. After the acetylation step, eremofortin A is converted to eremofortin C and then to PR-toxin. First the conversion of eremofortin A to eremofortin C proceeds by oxidation of the side chain of the molecule at C-12 and is catalyzed by the short-chain oxidoreductase prx1. The cytochrome P450 monooxygenase prx8 also plays a role in this step. The primary alcohol formed at C-12 is finally oxidized by the short-chain alcohol dehydrogenase prx4 that forms PR-toxin. The sequence is that of Eremophilane O-acetyltransferase prx11 from Penicillium rubens (strain ATCC 28089 / DSM 1075 / NRRL 1951 / Wisconsin 54-1255) (Penicillium chrysogenum).